A 143-amino-acid polypeptide reads, in one-letter code: Large ribosomal subunit protein uL11 (143 aa).

Belongs to the universal ribosomal protein uL11 family. As to quaternary structure, part of the ribosomal stalk of the 50S ribosomal subunit. Interacts with L10 and the large rRNA to form the base of the stalk. L10 forms an elongated spine to which L12 dimers bind in a sequential fashion forming a multimeric L10(L12)X complex. In terms of processing, one or more lysine residues are methylated.

In terms of biological role, forms part of the ribosomal stalk which helps the ribosome interact with GTP-bound translation factors. The chain is Large ribosomal subunit protein uL11 from Pseudomonas savastanoi pv. phaseolicola (strain 1448A / Race 6) (Pseudomonas syringae pv. phaseolicola (strain 1448A / Race 6)).